The primary structure comprises 283 residues: Elongation factor Ts (283 aa).

The segment at 79–82 (TDFV) is involved in Mg(2+) ion dislocation from EF-Tu.

This sequence belongs to the EF-Ts family.

It is found in the cytoplasm. In terms of biological role, associates with the EF-Tu.GDP complex and induces the exchange of GDP to GTP. It remains bound to the aminoacyl-tRNA.EF-Tu.GTP complex up to the GTP hydrolysis stage on the ribosome. This Shewanella baltica (strain OS155 / ATCC BAA-1091) protein is Elongation factor Ts.